The primary structure comprises 361 residues: Protease I (361 aa).

Belongs to the peptidase U35 family. As to quaternary structure, might interact with viral portal protein; this interaction gives rise to an early 25S initiator complex. The scaffolding protein Z and the capsid protein T should then be added to the initiator complex to yield immature prohead. Host GroEL and GroES are also essential for the correct assembly of viral head. Post-translationally, the N-terminus is acetylated.

Its subcellular location is the host cytoplasm. Protease I is involved in virion assembly and maturation. Protease I cleaves the portal protein to yield mature procapsids competent for DNA packaging. Isoform scaffold protein Z probably helps the capsid proteins to assemble into a functional capsid. The polypeptide is Protease I (I) (Escherichia phage Mu (Bacteriophage Mu)).